Consider the following 271-residue polypeptide: MPELPEVEVISNFLFDKIKNKKISNVTVNNWNLRVPITKNIDDLLKGKVINDIKRRGKYIISNIDASMAVIIHLGMSGKLIYVEDNQAQNKHDHVIFLFSDNTSLIFNDPRRFGLVIVLNREQELNFFNNLGIEPLTDEFDGHYLQKLLKNRKANIKSVLMNNKLIVGVGNIYASESLFRARISPLRLAQDLTYIECEKLAIEIKNTLSDAIAAGGSTLKDYAQPSGSAGYFQNNFYVYGKVQKPCRICNNIITLIRQNGRSTYFCNACQN.

The active-site Schiff-base intermediate with DNA is the Pro2. The Proton donor role is filled by Glu3. Lys58 serves as the catalytic Proton donor; for beta-elimination activity. The DNA site is built by His92, Arg111, and Arg152. The FPG-type zinc finger occupies 237–271; the sequence is YVYGKVQKPCRICNNIITLIRQNGRSTYFCNACQN. The active-site Proton donor; for delta-elimination activity is the Arg261.

The protein belongs to the FPG family. As to quaternary structure, monomer. Zn(2+) is required as a cofactor.

The enzyme catalyses Hydrolysis of DNA containing ring-opened 7-methylguanine residues, releasing 2,6-diamino-4-hydroxy-5-(N-methyl)formamidopyrimidine.. It carries out the reaction 2'-deoxyribonucleotide-(2'-deoxyribose 5'-phosphate)-2'-deoxyribonucleotide-DNA = a 3'-end 2'-deoxyribonucleotide-(2,3-dehydro-2,3-deoxyribose 5'-phosphate)-DNA + a 5'-end 5'-phospho-2'-deoxyribonucleoside-DNA + H(+). In terms of biological role, involved in base excision repair of DNA damaged by oxidation or by mutagenic agents. Acts as a DNA glycosylase that recognizes and removes damaged bases. Has a preference for oxidized purines, such as 7,8-dihydro-8-oxoguanine (8-oxoG). Has AP (apurinic/apyrimidinic) lyase activity and introduces nicks in the DNA strand. Cleaves the DNA backbone by beta-delta elimination to generate a single-strand break at the site of the removed base with both 3'- and 5'-phosphates. The protein is Formamidopyrimidine-DNA glycosylase of Wolbachia pipientis subsp. Culex pipiens (strain wPip).